Here is a 22-residue protein sequence, read N- to C-terminus: Mu-conotoxin KIIIB (22 aa).

Residues 1-2 constitute a propeptide that is removed on maturation; the sequence is KR. Intrachain disulfides connect Cys5–Cys13, Cys5–Cys19, Cys5–Cys20, Cys6–Cys13, Cys6–Cys19, Cys8–Cys19, and Cys8–Cys20. Pharmacophore key residues stretches follow at residues 14 to 16 and 18 to 19; these read RDH and RC. Cysteine amide is present on Cys20.

The protein belongs to the conotoxin M superfamily. As to quaternary structure, monomer. In terms of processing, toxins with three different disulfide connectivities have been synthesized. The conotoxin mu-KIIIA-P1 shows the connectivity C1-C5, C2-C4, and C3-C6, whereas mu-KIIIA-P2 shows the connectivity C1-C6, C2-C4, and C3-C5. The conotoxin mu-KIIIA-N has the 'native' fold of the mu-conotoxin family (C1-C4, C2-C5, and C3-C6). Mu-KIIIA-P1 and mu-KIIIA-P2 are obtained by both thermodynamic oxidative folding and regioselective synthesis. Mu-KIIIA-P1 is the major oxidative folding product. Mu-KIIIA-N is only obtained by regioselective synthesis. In terms of tissue distribution, expressed by the venom duct.

It is found in the secreted. Mu-conotoxin KIIIA-P1: mu-conotoxins block voltage-gated sodium channels (Nav). This toxin potently blocks Nav1.2/SCN2A (IC(50)5-124 nM), Nav1.4/SCN4A (IC(50)=20-90 nM), and Nav1.7/SCN9A (IC(50)=290-413 nM). It moderately blocks Nav1.1/SCN1A, and mNav1.6/SCN8A. It also shows a very low activity on Nav1.3/SCN3A. This toxin binds a microsite within the pore different from the tetrodotoxin binding site 1 (tested on Nav1.2). The block is partial, with a residual current that can be completely blocked by TTX. The toxin probably docks at a more superficial site in the outer vestibule of the channel than does TTX. On rNav1.2/SCN2A, it produces a block that is only partially reversible. The block of Nav1.7 is modified when beta-subunits are coexpressed with the alpha subunit. Hence, blocks of channels containing beta-1 and beta-3 subunits are more potent (compared to channels without beta subunits), whereas blocks of channels containing beta-2 and beta-4 subunits are less potent (compared to channels without beta subunits). Functionally, mu-conotoxin KIIIA-P2: This toxin potently blocks Nav1.2/SCN2A (Kd=230 nM, IC(50)=1.37 uM) and Nav1.4/SCN4A (Kd=830 nM, IC(50)=2 uM). It also moderately blocks Nav1.7/SCN9A (Kd=1.57 uM, IC(50)=5.4 uM). In addition, this toxin may also inhibit other sodium channels, as does Mu-conotoxin KIIIA-P1. In terms of biological role, mu-conotoxin KIIIA-N: This toxin moderately blocks Nav1.2/SCN2A (IC(50)=875 nM), Nav1.4/SCN4A (IC(50)=472 nM), and Nav1.7/SCN9A (IC(50)=887 nM). Its function is as follows. Mu-conotoxin KIIIB-P1: This toxin potently blocks Nav1.2/SCN2A (Kd=470 nM). In addition, this toxin may also inhibit other sodium channels, as does Mu-conotoxin KIIIA-P1. Mu-conotoxin KIIIB-P2: This toxin potently blocks Nav1.2/SCN2A (Kd=26 nM). In addition, this toxin may also inhibit other sodium channels, as does Mu-conotoxin KIIIA-P1. The chain is Mu-conotoxin KIIIB from Conus kinoshitai (Kinoshita's cone).